The following is a 198-amino-acid chain: Imidazoleglycerol-phosphate dehydratase (198 aa).

Belongs to the imidazoleglycerol-phosphate dehydratase family.

The protein localises to the cytoplasm. It catalyses the reaction D-erythro-1-(imidazol-4-yl)glycerol 3-phosphate = 3-(imidazol-4-yl)-2-oxopropyl phosphate + H2O. Its pathway is amino-acid biosynthesis; L-histidine biosynthesis; L-histidine from 5-phospho-alpha-D-ribose 1-diphosphate: step 6/9. This Gluconobacter oxydans (strain 621H) (Gluconobacter suboxydans) protein is Imidazoleglycerol-phosphate dehydratase.